The primary structure comprises 137 residues: Small ribosomal subunit protein uS12 (137 aa).

Positions 1–43 (MPTINQLVRKGRVSKTKKSDSPALNKGYNSFKKRMTDQNAPQK) are disordered.

It belongs to the universal ribosomal protein uS12 family. In terms of assembly, part of the 30S ribosomal subunit. Contacts proteins S8 and S17. May interact with IF1 in the 30S initiation complex.

With S4 and S5 plays an important role in translational accuracy. Its function is as follows. Interacts with and stabilizes bases of the 16S rRNA that are involved in tRNA selection in the A site and with the mRNA backbone. Located at the interface of the 30S and 50S subunits, it traverses the body of the 30S subunit contacting proteins on the other side and probably holding the rRNA structure together. The combined cluster of proteins S8, S12 and S17 appears to hold together the shoulder and platform of the 30S subunit. This chain is Small ribosomal subunit protein uS12, found in Oceanobacillus iheyensis (strain DSM 14371 / CIP 107618 / JCM 11309 / KCTC 3954 / HTE831).